The following is a 376-amino-acid chain: Chaperone protein DnaJ (376 aa).

In terms of domain architecture, J spans 5–70 (DYYEILGVSK…QKRAAYDQYG (66 aa)). The segment at 131–209 (GVTKEIRIPT…CHGHGRVERS (79 aa)) adopts a CR-type zinc-finger fold. The Zn(2+) site is built by Cys144, Cys147, Cys161, Cys164, Cys183, Cys186, Cys197, and Cys200. 4 CXXCXGXG motif repeats span residues 144–151 (CDVCHGSG), 161–168 (CPTCHGSG), 183–190 (CPHCQGRG), and 197–204 (CNKCHGHG).

Belongs to the DnaJ family. As to quaternary structure, homodimer. It depends on Zn(2+) as a cofactor.

Its subcellular location is the cytoplasm. Its function is as follows. Participates actively in the response to hyperosmotic and heat shock by preventing the aggregation of stress-denatured proteins and by disaggregating proteins, also in an autonomous, DnaK-independent fashion. Unfolded proteins bind initially to DnaJ; upon interaction with the DnaJ-bound protein, DnaK hydrolyzes its bound ATP, resulting in the formation of a stable complex. GrpE releases ADP from DnaK; ATP binding to DnaK triggers the release of the substrate protein, thus completing the reaction cycle. Several rounds of ATP-dependent interactions between DnaJ, DnaK and GrpE are required for fully efficient folding. Also involved, together with DnaK and GrpE, in the DNA replication of plasmids through activation of initiation proteins. The polypeptide is Chaperone protein DnaJ (Escherichia coli (strain K12 / DH10B)).